A 228-amino-acid polypeptide reads, in one-letter code: 2,3-bisphosphoglycerate-dependent phosphoglycerate mutase (228 aa).

Residues 8-15, 21-22, R60, 87-90, K98, 114-115, and 183-184 each bind substrate; these read RHGQSVWN, TG, ERHY, RR, and GN. The active-site Tele-phosphohistidine intermediate is H9. The Proton donor/acceptor role is filled by E87.

It belongs to the phosphoglycerate mutase family. BPG-dependent PGAM subfamily.

The catalysed reaction is (2R)-2-phosphoglycerate = (2R)-3-phosphoglycerate. The protein operates within carbohydrate degradation; glycolysis; pyruvate from D-glyceraldehyde 3-phosphate: step 3/5. Catalyzes the interconversion of 2-phosphoglycerate and 3-phosphoglycerate. This Staphylococcus carnosus (strain TM300) protein is 2,3-bisphosphoglycerate-dependent phosphoglycerate mutase.